Consider the following 860-residue polypeptide: DNA mismatch repair protein MutS (860 aa).

607-614 (GPNMSGKS) contacts ATP.

This sequence belongs to the DNA mismatch repair MutS family.

Functionally, this protein is involved in the repair of mismatches in DNA. It is possible that it carries out the mismatch recognition step. This protein has a weak ATPase activity. The sequence is that of DNA mismatch repair protein MutS from Listeria monocytogenes serotype 4a (strain HCC23).